Consider the following 115-residue polypeptide: U3-lycotoxin-Ls1h (115 aa).

The signal sequence occupies residues 1 to 20 (MKFVLLFGVFLVTLFSYSSA). Positions 21-44 (EMLDDFDQADEDELLSLIEKEEAR) are excised as a propeptide. Intrachain disulfides connect Cys48/Cys63, Cys55/Cys72, Cys62/Cys87, and Cys74/Cys85.

This sequence belongs to the neurotoxin 19 (CSTX) family. 01 subfamily. In terms of tissue distribution, expressed by the venom gland.

It is found in the secreted. The polypeptide is U3-lycotoxin-Ls1h (Lycosa singoriensis (Wolf spider)).